Reading from the N-terminus, the 304-residue chain is Probable 5-dehydro-4-deoxyglucarate dehydratase (304 aa).

This sequence belongs to the DapA family.

The enzyme catalyses 5-dehydro-4-deoxy-D-glucarate + H(+) = 2,5-dioxopentanoate + CO2 + H2O. It participates in carbohydrate acid metabolism; D-glucarate degradation; 2,5-dioxopentanoate from D-glucarate: step 2/2. The chain is Probable 5-dehydro-4-deoxyglucarate dehydratase from Arthrobacter sp. (strain FB24).